The primary structure comprises 793 residues: Lon protease 1 (793 aa).

The Lon N-terminal domain maps to 8–202 (VPVIPLKNSV…KLLDRLQELK (195 aa)). 354-361 (GPPGVGKT) lines the ATP pocket. Residues 590 to 770 (LLPPGVVTGL…NEVLKITLGV (181 aa)) enclose the Lon proteolytic domain. Active-site residues include S676 and K719.

It belongs to the peptidase S16 family. In terms of assembly, homohexamer. Organized in a ring with a central cavity.

It is found in the cytoplasm. The enzyme catalyses Hydrolysis of proteins in presence of ATP.. In terms of biological role, ATP-dependent serine protease that mediates the selective degradation of mutant and abnormal proteins as well as certain short-lived regulatory proteins. Required for cellular homeostasis and for survival from DNA damage and developmental changes induced by stress. Degrades polypeptides processively to yield small peptide fragments that are 5 to 10 amino acids long. Binds to DNA in a double-stranded, site-specific manner. This is Lon protease 1 from Bdellovibrio bacteriovorus (strain ATCC 15356 / DSM 50701 / NCIMB 9529 / HD100).